Here is a 762-residue protein sequence, read N- to C-terminus: Mediator of RNA polymerase II transcription subunit 15 (762 aa).

3 disordered regions span residues 70 to 102, 311 to 330, and 406 to 494; these read AQQA…INAL, GVGH…GMGP, and GSGG…LNPQ. Residues 76–94 are compositionally biased toward gly residues; that stretch reads DGGGNSSQQGGGGGGGGSG. Residues 465-481 show a composition bias toward polar residues; that stretch reads QRSTIGQSPGGSLNTPG.

The protein belongs to the Mediator complex subunit 15 family. As to quaternary structure, component of the Mediator complex.

The protein localises to the nucleus. Component of the Mediator complex, a coactivator involved in the regulated transcription of nearly all RNA polymerase II-dependent genes. Mediator functions as a bridge to convey information from gene-specific regulatory proteins to the basal RNA polymerase II transcription machinery. Mediator is recruited to promoters by direct interactions with regulatory proteins and serves as a scaffold for the assembly of a functional preinitiation complex with RNA polymerase II and the general transcription factors. The sequence is that of Mediator of RNA polymerase II transcription subunit 15 (MED15) from Anopheles gambiae (African malaria mosquito).